The primary structure comprises 491 residues: Proline-rich protein PRCC (491 aa).

The interval 1–100 (MSLVAYASSD…PPPPGVSPAE (100 aa)) is mediates interaction with MAD2L2. 3 disordered regions span residues 1 to 244 (MSLV…SPSA), 260 to 313 (ITQE…PAFQ), and 432 to 454 (EEKTMKSFSKKKGEQPTGQQRRK). Residues 10 to 26 (DESEPDEAEPEPEEEEA) show a composition bias toward acidic residues. A compositionally biased stretch (low complexity) spans 40 to 49 (ASLPAPKGPA). The span at 50–96 (LLPPPPQMLAPAFPPPLLLPPPTGDPRLQPPPPLPFGLGGFPPPPGV) shows a compositional bias: pro residues. Residues Ser-97, Ser-114, Ser-157, Ser-159, Ser-212, and Ser-218 each carry the phosphoserine modification. Low complexity predominate over residues 111–120 (GLPSPRGPGL). The span at 230–244 (APVVGTTTTTPSPSA) shows a compositional bias: low complexity. Position 239 is a phosphothreonine (Thr-239). 2 positions are modified to phosphoserine: Ser-241 and Ser-267. Acidic residues predominate over residues 262–272 (QEEDDSDEEVA). Pro residues predominate over residues 287 to 307 (GVEPYPYPIPTVPEELPPGTE).

As to quaternary structure, interacts with MAD2L2; the interaction is direct. Ubiquitous in fetal and adult tissues.

The protein localises to the nucleus. Functionally, may regulate cell cycle progression through interaction with MAD2L2. This is Proline-rich protein PRCC (PRCC) from Homo sapiens (Human).